The chain runs to 2362 residues: Filaggrin-2 (2362 aa).

The tract at residues methionine 1–leucine 81 is S-100-like. 2 consecutive EF-hand domains span residues valine 8 to proline 43 and aspartate 49 to alanine 84. Aspartate 62, aspartate 64, aspartate 66, arginine 68, and glutamate 73 together coordinate Ca(2+). Disordered stretches follow at residues alanine 96–cysteine 238 and glycine 284–proline 2109. Residues glutamate 111–glutamate 120 are compositionally biased toward acidic residues. Composition is skewed to basic and acidic residues over residues lysine 159–arginine 174 and asparagine 189–glutamate 214. Filaggrin repeat units lie at residues glycine 261–cysteine 308 and histidine 373–phenylalanine 414. Polar residues-rich tracts occupy residues glycine 284–glycine 317, serine 342–serine 375, and glycine 383–methionine 395. The span at serine 396–serine 411 shows a compositional bias: low complexity. Composition is skewed to polar residues over residues alanine 421 to phenylalanine 443 and serine 450 to serine 469. Composition is skewed to low complexity over residues glycine 474–glycine 519, glycine 539–glycine 550, and serine 567–glutamine 580. A Filaggrin 3 repeat occupies glutamine 555–glutamine 607. Over residues glutamine 581–threonine 590 the composition is skewed to gly residues. A compositionally biased stretch (low complexity) spans serine 599–serine 618. The segment covering glycine 632 to glutamate 653 has biased composition (gly residues). Residues histidine 654–serine 675 show a composition bias toward low complexity. Residues glycine 672–serine 723 form a Filaggrin 4 repeat. The span at threonine 682–glycine 694 shows a compositional bias: gly residues. Composition is skewed to low complexity over residues serine 695–histidine 705, glycine 728–serine 754, and glycine 780–glycine 798. Positions threonine 826–glycine 838 are enriched in gly residues. Residues serine 846–glycine 864 are compositionally biased toward low complexity. One copy of the Filaggrin 5 repeat lies at histidine 880–glutamate 927. Composition is skewed to polar residues over residues alanine 886 to serine 896 and alanine 912 to phenylalanine 925. A compositionally biased stretch (basic and acidic residues) spans glutamate 973–valine 982. One copy of the Filaggrin 6 repeat lies at proline 984–tyrosine 1035. Residues glycine 1014–tyrosine 1035 show a composition bias toward polar residues. Basic and acidic residues predominate over residues glutamate 1047–glutamine 1059. The span at cysteine 1067–histidine 1077 shows a compositional bias: basic residues. Residues glycine 1104–proline 1121 are compositionally biased toward low complexity. Gly residues predominate over residues serine 1142–glutamine 1152. The span at histidine 1162–aspartate 1174 shows a compositional bias: polar residues. One copy of the Filaggrin 7 repeat lies at glutamine 1165 to histidine 1210. Residues serine 1175–arginine 1193 show a composition bias toward low complexity. 3 positions are modified to phosphoserine: serine 1198, serine 1204, and serine 1205. Over residues serine 1220–glutamine 1232 the composition is skewed to gly residues. Over residues serine 1255–arginine 1273 the composition is skewed to low complexity. Serine 1278, serine 1284, and serine 1285 each carry phosphoserine. One copy of the Filaggrin 8 repeat lies at valine 1280 to serine 1334. A compositionally biased stretch (gly residues) spans serine 1300 to glutamine 1310. Positions serine 1333–arginine 1351 are enriched in low complexity. 3 positions are modified to phosphoserine: serine 1356, serine 1362, and serine 1363. Residues glutamate 1377–histidine 1396 show a composition bias toward basic and acidic residues. A compositionally biased stretch (low complexity) spans proline 1413–proline 1436. Phosphoserine is present on residues serine 1438 and serine 1439. Over residues serine 1454 to glutamine 1464 the composition is skewed to gly residues. A Filaggrin 9 repeat occupies histidine 1474–histidine 1522. The span at serine 1487–arginine 1505 shows a compositional bias: low complexity. A phosphoserine mark is found at serine 1510, serine 1516, and serine 1517. Residues serine 1532–glutamine 1544 show a composition bias toward gly residues. Residues serine 1567–arginine 1585 are compositionally biased toward low complexity. Phosphoserine is present on residues serine 1590, serine 1596, and serine 1597. Composition is skewed to low complexity over residues serine 1643–arginine 1661 and glutamine 1683–glutamine 1696. The segment covering histidine 1698 to histidine 1708 has biased composition (basic and acidic residues). The stretch at arginine 1723 to histidine 1756 is one Filaggrin 10 repeat. Residues glutamine 1724–arginine 1739 show a composition bias toward low complexity. 6 positions are modified to phosphoserine: serine 1744, serine 1750, serine 1751, serine 1824, serine 1830, and serine 1831. Positions serine 1801–proline 1825 are enriched in low complexity. The span at glutamate 1829–histidine 1848 shows a compositional bias: basic and acidic residues. Residues serine 1879–arginine 1897 show a composition bias toward low complexity. A phosphoserine mark is found at serine 1902, serine 1908, and serine 1909. Residues serine 1924–glutamine 1934 show a composition bias toward gly residues. The segment covering arginine 1949–arginine 1975 has biased composition (low complexity). A phosphoserine mark is found at serine 1980, serine 1986, and serine 1987. Gly residues predominate over residues serine 2002–glutamine 2012. The Filaggrin 11 repeat unit spans residues glutamine 2016–glutamine 2070. 3 stretches are compositionally biased toward polar residues: residues glycine 2026–lysine 2048, histidine 2061–histidine 2079, and leucine 2100–proline 2109. Serine 2104 carries the phosphoserine modification. A Filaggrin 12 repeat occupies aspartate 2218–leucine 2259.

Belongs to the S100-fused protein family. The protein in the N-terminal section; belongs to the S-100 family. In terms of processing, deiminated by PADI1, PADI2 or PADI3 in vitro. The deiminated form is degraded by calpain-1/CAPN1 more quickly and into shorter peptides than the intact protein. May be processed by calpain-1/CAPN1.

It is found in the cytoplasm. Its subcellular location is the cytoplasmic granule. In terms of biological role, essential for normal cell-cell adhesion in the cornified cell layers. Important for proper integrity and mechanical strength of the stratum corneum of the epidermis. This Mus musculus (Mouse) protein is Filaggrin-2 (Flg2).